Consider the following 27-residue polypeptide: Cupiennin-3b (27 aa).

Glutamate 27 carries the glutamic acid 1-amide modification.

Expressed by the venom gland.

It is found in the secreted. This is Cupiennin-3b from Cupiennius salei (American wandering spider).